The primary structure comprises 534 residues: Cytochrome c oxidase subunit 1 (534 aa).

A helical membrane pass occupies residues 16–36 (VLYFIFSVFCGMAGTGMSMII). Ca(2+) contacts are provided by glutamate 39 and glycine 44. Histidine 62 provides a ligand contact to Fe(II)-heme a. The next 6 helical transmembrane spans lie at 64-84 (ILMV…NYLL), 101-121 (ISFW…LVES), 147-167 (AIFA…NFIV), 183-203 (PLFV…LPVL), 235-255 (LFWF…FGVI), and 267-287 (VFGE…GFLV). Histidine 241 contacts Cu cation. Residues 241-245 (HPEVY) constitute a cross-link (1'-histidyl-3'-tyrosine (His-Tyr)). Residue tyrosine 245 coordinates O2. Residues histidine 290 and histidine 291 each coordinate Cu cation. Transmembrane regions (helical) follow at residues 310 to 330 (MIIA…IYGG) and 338 to 358 (MMYA…GVAL). Mg(2+) contacts are provided by histidine 368 and aspartate 369. A run of 2 helical transmembrane segments spans residues 372 to 392 (YVVA…MFAG) and 414 to 434 (FWLI…LGIN). A heme a3-binding site is contributed by histidine 376. Histidine 378 contributes to the Fe(II)-heme a binding site. Proline 441 serves as a coordination point for Ca(2+). A helical membrane pass occupies residues 453-473 (VSSIGSFIAMISLILFIYILF).

The protein belongs to the heme-copper respiratory oxidase family. Component of the cytochrome c oxidase (complex IV, CIV), a multisubunit enzyme composed of a catalytic core of 3 subunits and several supernumerary subunits. The complex exists as a monomer or a dimer and forms supercomplexes (SCs) in the inner mitochondrial membrane with ubiquinol-cytochrome c oxidoreductase (cytochrome b-c1 complex, complex III, CIII). Heme is required as a cofactor. It depends on Cu cation as a cofactor.

Its subcellular location is the mitochondrion inner membrane. The catalysed reaction is 4 Fe(II)-[cytochrome c] + O2 + 8 H(+)(in) = 4 Fe(III)-[cytochrome c] + 2 H2O + 4 H(+)(out). The protein operates within energy metabolism; oxidative phosphorylation. Component of the cytochrome c oxidase, the last enzyme in the mitochondrial electron transport chain which drives oxidative phosphorylation. The respiratory chain contains 3 multisubunit complexes succinate dehydrogenase (complex II, CII), ubiquinol-cytochrome c oxidoreductase (cytochrome b-c1 complex, complex III, CIII) and cytochrome c oxidase (complex IV, CIV), that cooperate to transfer electrons derived from NADH and succinate to molecular oxygen, creating an electrochemical gradient over the inner membrane that drives transmembrane transport and the ATP synthase. Cytochrome c oxidase is the component of the respiratory chain that catalyzes the reduction of oxygen to water. Electrons originating from reduced cytochrome c in the intermembrane space (IMS) are transferred via the dinuclear copper A center (CU(A)) of subunit 2 and heme A of subunit 1 to the active site in subunit 1, a binuclear center (BNC) formed by heme A3 and copper B (CU(B)). The BNC reduces molecular oxygen to 2 water molecules using 4 electrons from cytochrome c in the IMS and 4 protons from the mitochondrial matrix. The chain is Cytochrome c oxidase subunit 1 (COX1) from Vanderwaltozyma polyspora (strain ATCC 22028 / DSM 70294 / BCRC 21397 / CBS 2163 / NBRC 10782 / NRRL Y-8283 / UCD 57-17) (Kluyveromyces polysporus).